The primary structure comprises 311 residues: tRNA-cytidine(32) 2-sulfurtransferase (311 aa).

The PP-loop motif motif lies at 47–52 (SGGKDS). Residues Cys122, Cys125, and Cys213 each coordinate [4Fe-4S] cluster.

This sequence belongs to the TtcA family. Homodimer. Mg(2+) serves as cofactor. [4Fe-4S] cluster is required as a cofactor.

It is found in the cytoplasm. It carries out the reaction cytidine(32) in tRNA + S-sulfanyl-L-cysteinyl-[cysteine desulfurase] + AH2 + ATP = 2-thiocytidine(32) in tRNA + L-cysteinyl-[cysteine desulfurase] + A + AMP + diphosphate + H(+). It participates in tRNA modification. Functionally, catalyzes the ATP-dependent 2-thiolation of cytidine in position 32 of tRNA, to form 2-thiocytidine (s(2)C32). The sulfur atoms are provided by the cysteine/cysteine desulfurase (IscS) system. The polypeptide is tRNA-cytidine(32) 2-sulfurtransferase (Escherichia coli (strain K12 / MC4100 / BW2952)).